Consider the following 355-residue polypeptide: 3-dehydroquinate synthase (355 aa).

NAD(+) is bound by residues 71–76, 105–109, 129–130, Lys142, and Lys151; these read EGEERK, GVVGD, and TS. Residues Glu184, His246, and His263 each contribute to the Zn(2+) site.

The protein belongs to the sugar phosphate cyclases superfamily. Dehydroquinate synthase family. NAD(+) is required as a cofactor. Co(2+) serves as cofactor. The cofactor is Zn(2+).

It is found in the cytoplasm. The catalysed reaction is 7-phospho-2-dehydro-3-deoxy-D-arabino-heptonate = 3-dehydroquinate + phosphate. It participates in metabolic intermediate biosynthesis; chorismate biosynthesis; chorismate from D-erythrose 4-phosphate and phosphoenolpyruvate: step 2/7. Its function is as follows. Catalyzes the conversion of 3-deoxy-D-arabino-heptulosonate 7-phosphate (DAHP) to dehydroquinate (DHQ). This chain is 3-dehydroquinate synthase, found in Streptococcus pneumoniae (strain ATCC BAA-255 / R6).